A 401-amino-acid chain; its full sequence is 8-amino-7-oxononanoate synthase (401 aa).

R24 serves as a coordination point for substrate. Position 111–112 (G111–F112) interacts with pyridoxal 5'-phosphate. H137 serves as a coordination point for substrate. Pyridoxal 5'-phosphate is bound by residues S183, H211, and T240. An N6-(pyridoxal phosphate)lysine modification is found at K243. Position 357 (T357) interacts with substrate.

It belongs to the class-II pyridoxal-phosphate-dependent aminotransferase family. BioF subfamily. As to quaternary structure, homodimer. The cofactor is pyridoxal 5'-phosphate.

It carries out the reaction 6-carboxyhexanoyl-[ACP] + L-alanine + H(+) = (8S)-8-amino-7-oxononanoate + holo-[ACP] + CO2. It participates in cofactor biosynthesis; biotin biosynthesis. Functionally, catalyzes the decarboxylative condensation of pimeloyl-[acyl-carrier protein] and L-alanine to produce 8-amino-7-oxononanoate (AON), [acyl-carrier protein], and carbon dioxide. The chain is 8-amino-7-oxononanoate synthase from Xanthomonas campestris pv. campestris (strain 8004).